The following is a 72-amino-acid chain: Protein RALF-like 11 (72 aa).

The N-terminal stretch at 1-17 (MKAWLICLLVICAAVIA) is a signal peptide. 2 disulfide bridges follow: C34/C43 and C63/C69.

Belongs to the plant rapid alkalinization factor (RALF) family.

It is found in the secreted. Its function is as follows. Cell signaling peptide that may regulate plant stress, growth, and development. Mediates a rapid alkalinization of extracellular space by mediating a transient increase in the cytoplasmic Ca(2+) concentration leading to a calcium-dependent signaling events through a cell surface receptor and a concomitant activation of some intracellular mitogen-activated protein kinases. In Arabidopsis thaliana (Mouse-ear cress), this protein is Protein RALF-like 11 (RALFL11).